We begin with the raw amino-acid sequence, 480 residues long: Zinc finger protein ztf-16 (480 aa).

The segment at 5 to 27 (NACTECGFTTTVFSEFQGHIEKH) adopts a C2H2-type 1 zinc-finger fold. The disordered stretch occupies residues 25 to 75 (EKHENEHSRSSSGEMSNSQTIEWGDGIQSSTPSPRSTPPSDPTPSPDSDEH). Positions 34-45 (SSSGEMSNSQTI) are enriched in polar residues. Residues 59–69 (RSTPPSDPTPS) are compositionally biased toward pro residues. C2H2-type zinc fingers lie at residues 103-125 (HVCP…LEAH), 133-155 (YQCD…RMRH), 161-183 (YECR…SMTH), 190-215 (FDCP…EETH), and 223-246 (ASCK…QTRH). 3 disordered regions span residues 243-275 (QTRH…MDPA), 290-311 (EFSP…DKIP), and 376-417 (TSSS…KEDE). Basic and acidic residues predominate over residues 244-259 (TRHDDSESSPKKENTP). 2 stretches are compositionally biased toward low complexity: residues 292 to 305 (SPPN…STSS) and 376 to 403 (TSSS…SLSL). The span at 404–413 (TEKEKSPTPE) shows a compositional bias: basic and acidic residues. 2 C2H2-type zinc fingers span residues 420–442 (VECC…KSLH) and 448–472 (FKCA…FADH).

This sequence belongs to the Ikaros C2H2-type zinc-finger protein family. Expressed in the somatic gonad, hypodermis and cells in the head and tail. Expressed in amphid and phasmid sheath glia, amphid and phasmid socket glia, and in neurons in the head.

Its subcellular location is the nucleus. Positively regulates the expression of ver-1 in the amphid sheath glia of amphid sensory neurons. Together with ehn-3, plays a role in somatic gonad development and is required for proper gonadal primordium assembly and somatic gonad precursor cell morphology. This is Zinc finger protein ztf-16 from Caenorhabditis elegans.